The following is a 619-amino-acid chain: Grainyhead-like protein 2 homolog (619 aa).

The tract at residues 1–90 (MSQETDNKRL…KINEGHEDQD (90 aa)) is transcription activation. 3 disordered regions span residues 86-108 (HEDQ…STGE), 125-147 (NDTV…PQPA), and 423-444 (EERK…CNNS). Residues 99-108 (ETPSNLSTGE) are compositionally biased toward polar residues. Residues 239 to 477 (ASSTFQYTLE…DLDVQPVLFI (239 aa)) enclose the Grh/CP2 DB domain.

Belongs to the grh/CP2 family. Grainyhead subfamily.

It is found in the nucleus. The protein resides in the membrane. Its function is as follows. Transcription factor playing an important role in primary neurulation and in epithelial development. Binds directly to the consensus DNA sequence 5'-AACCGGTT-3' acting as an activator and repressor on distinct target genes. The sequence is that of Grainyhead-like protein 2 homolog (grhl2) from Xenopus tropicalis (Western clawed frog).